Reading from the N-terminus, the 437-residue chain is MQVNVETISPVSKKVSIEIPADQVNSEIEKTYATIQKRAKIQGFRPGKAPLQLIKRTYADSMRDEVMRRFYETTLFKTLAEHKIEPIDAPTVECDILEEGTPFKYSALVEVMPEVLLTQYTGLEITKERYVFDPQKIEDEIARMRDGMAQLVPVEGDVAVEMGHMVTIDYAFSVDGFPEESTSAENAVVEVGAHRLLPEFEDQLVGMKCGESKHVTVTLPEAYRNPEVAGKEGAFMVTLNEIKRKELPELNDEFAQQFGEFETVEQLREKMTEYHQQHEQDRIEQEQRETVIQALIEKNPLDVPQSMVKRQVEQMLQNLKNRLKSRNMSMEMMGMDDDSFRERVRDSATDKVRGGLLLMALIEKEDFSVSDEEIEKRYEKLAGGNEEMLERIKEHYTSSPSVRHSLIAEIKEDKAVRFLLDNAVITETDPAETAAEA.

The PPIase FKBP-type domain occupies 163–248; it reads GHMVTIDYAF…LNEIKRKELP (86 aa).

It belongs to the FKBP-type PPIase family. Tig subfamily.

It localises to the cytoplasm. The enzyme catalyses [protein]-peptidylproline (omega=180) = [protein]-peptidylproline (omega=0). Its function is as follows. Involved in protein export. Acts as a chaperone by maintaining the newly synthesized protein in an open conformation. Functions as a peptidyl-prolyl cis-trans isomerase. This Pelobacter propionicus (strain DSM 2379 / NBRC 103807 / OttBd1) protein is Trigger factor.